Here is a 381-residue protein sequence, read N- to C-terminus: Homoserine O-succinyltransferase (381 aa).

The region spanning 45–360 is the AB hydrolase-1 domain; the sequence is NAVLVCHALN…PHGHDAFLLD (316 aa). Residue Ser151 is the Nucleophile of the active site. Residue Arg221 participates in substrate binding. Catalysis depends on residues Asp321 and His354. A substrate-binding site is contributed by Asp355.

The protein belongs to the AB hydrolase superfamily. MetX family. As to quaternary structure, homodimer.

It localises to the cytoplasm. It carries out the reaction L-homoserine + succinyl-CoA = O-succinyl-L-homoserine + CoA. It functions in the pathway amino-acid biosynthesis; L-methionine biosynthesis via de novo pathway; O-succinyl-L-homoserine from L-homoserine: step 1/1. Its function is as follows. Transfers a succinyl group from succinyl-CoA to L-homoserine, forming succinyl-L-homoserine. The sequence is that of Homoserine O-succinyltransferase from Burkholderia ambifaria (strain ATCC BAA-244 / DSM 16087 / CCUG 44356 / LMG 19182 / AMMD) (Burkholderia cepacia (strain AMMD)).